Consider the following 100-residue polypeptide: MSCCLSSRVHITRPVLEQFLSFAKYLDGLSHGVPLLKQLCDHILFINPAIWIHTPAKVQLSLYTYLSAEFIGTATIYTTICRIGTVIKDNAHLKILLLGY.

Expressed in prostate and testis.

This chain is Putative protein BCL8 (NBEAP1), found in Homo sapiens (Human).